We begin with the raw amino-acid sequence, 89 residues long: NADH-ubiquinone oxidoreductase chain 4L (89 aa).

The next 3 membrane-spanning stretches (helical) occupy residues 1-21 (MNITLILFLIGILGFVLNRKN), 22-42 (IILMLISIEIMLLAITFLILV), and 57-77 (IYIIVVAGAESAIGLAILVAF).

Belongs to the complex I subunit 4L family.

The protein resides in the mitochondrion membrane. The enzyme catalyses a ubiquinone + NADH + 5 H(+)(in) = a ubiquinol + NAD(+) + 4 H(+)(out). Its function is as follows. Core subunit of the mitochondrial membrane respiratory chain NADH dehydrogenase (Complex I) that is believed to belong to the minimal assembly required for catalysis. Complex I functions in the transfer of electrons from NADH to the respiratory chain. The immediate electron acceptor for the enzyme is believed to be ubiquinone. The chain is NADH-ubiquinone oxidoreductase chain 4L (ndh-4L) from Neurospora crassa (strain ATCC 24698 / 74-OR23-1A / CBS 708.71 / DSM 1257 / FGSC 987).